We begin with the raw amino-acid sequence, 496 residues long: D-2-hydroxyglutarate--pyruvate transhydrogenase DLD3 (496 aa).

Lys17 is covalently cross-linked (Glycyl lysine isopeptide (Lys-Gly) (interchain with G-Cter in ubiquitin)). The FAD-binding PCMH-type domain maps to 64–243; it reads YRGQSNLILL…TGVSIVAAAK (180 aa).

Belongs to the FAD-binding oxidoreductase/transferase type 4 family. It depends on FAD as a cofactor.

Its subcellular location is the cytoplasm. The catalysed reaction is (R)-lactate + 2 Fe(III)-[cytochrome c] = 2 Fe(II)-[cytochrome c] + pyruvate + 2 H(+). It carries out the reaction (R)-2-hydroxyglutarate + pyruvate = (R)-lactate + 2-oxoglutarate. Functionally, catalyzes the reversible oxidation of (R)-2-hydroxyglutarate to 2-oxoglutarate coupled to reduction of pyruvate to (R)-lactate. Can also use oxaloacetate as electron acceptor instead of pyruvate producing (R)-malate. The protein is D-2-hydroxyglutarate--pyruvate transhydrogenase DLD3 (DLD3) of Saccharomyces cerevisiae (strain ATCC 204508 / S288c) (Baker's yeast).